A 483-amino-acid chain; its full sequence is Altronate oxidoreductase (483 aa).

18-29 (IIQFGEGNFLRA) is an NAD(+) binding site.

This sequence belongs to the mannitol dehydrogenase family. UxaB subfamily.

The catalysed reaction is D-altronate + NAD(+) = keto-D-tagaturonate + NADH + H(+). It participates in carbohydrate metabolism; pentose and glucuronate interconversion. This chain is Altronate oxidoreductase, found in Escherichia coli O7:K1 (strain IAI39 / ExPEC).